Consider the following 205-residue polypeptide: Recombination protein RecR (205 aa).

The C4-type zinc-finger motif lies at 60–75; sequence CKVCHNISDTETCQIC. The Toprim domain occupies 83-178; it reads SMVCVVENIR…KLSVLARGVS (96 aa).

It belongs to the RecR family.

Its function is as follows. May play a role in DNA repair. It seems to be involved in an RecBC-independent recombinational process of DNA repair. It may act with RecF and RecO. The polypeptide is Recombination protein RecR (Bacteroides fragilis (strain ATCC 25285 / DSM 2151 / CCUG 4856 / JCM 11019 / LMG 10263 / NCTC 9343 / Onslow / VPI 2553 / EN-2)).